A 194-amino-acid polypeptide reads, in one-letter code: Early growth response protein 1 (194 aa).

3 C2H2-type zinc fingers span residues 1-18 (CDRR…IRIH), 24-46 (FQCR…IRTH), and 52-74 (FACD…TKIH). The disordered stretch occupies residues 66–88 (ERKRHTKIHLRQKDKKVEKAASV). Basic residues predominate over residues 69–79 (RHTKIHLRQKD).

This sequence belongs to the EGR C2H2-type zinc-finger protein family.

Its subcellular location is the nucleus. It is found in the cytoplasm. Functionally, transcriptional regulator. Recognizes and binds to the DNA sequence 5'-GCG(T/G)GGGCG-3'(EGR-site) in the promoter region of target genes. Binds double-stranded target DNA, irrespective of the cytosine methylation status. Regulates the transcription of numerous target genes, and thereby plays an important role in regulating the response to growth factors, DNA damage, and ischemia. Plays a role in the regulation of cell survival, proliferation and cell death. Mediates responses to ischemia and hypoxia; regulates the expression of proteins that are involved in inflammatory processes. Plays a role in regulating the expression of circadian clock genes. This chain is Early growth response protein 1 (EGR1), found in Coturnix japonica (Japanese quail).